A 229-amino-acid polypeptide reads, in one-letter code: tRNA (guanine-N(7)-)-methyltransferase (229 aa).

4 residues coordinate S-adenosyl-L-methionine: glutamate 62, glutamate 87, aspartate 114, and aspartate 137. Residue aspartate 137 is part of the active site. A substrate-binding site is contributed by lysine 141. Residues 143–148 are interaction with RNA; the sequence is KHNKRR. Substrate contacts are provided by residues aspartate 173 and 208 to 211; that span reads TKFE.

The protein belongs to the class I-like SAM-binding methyltransferase superfamily. TrmB family.

It carries out the reaction guanosine(46) in tRNA + S-adenosyl-L-methionine = N(7)-methylguanosine(46) in tRNA + S-adenosyl-L-homocysteine. It functions in the pathway tRNA modification; N(7)-methylguanine-tRNA biosynthesis. In terms of biological role, catalyzes the formation of N(7)-methylguanine at position 46 (m7G46) in tRNA. The sequence is that of tRNA (guanine-N(7)-)-methyltransferase from Francisella tularensis subsp. novicida (strain U112).